The chain runs to 302 residues: Serine/threonine-protein phosphatase alpha-3 isoform (302 aa).

Residues Asp62, His64, Asp90, and Asn122 each coordinate Mn(2+). His123 serves as the catalytic Proton donor. Residues His171 and His246 each coordinate Mn(2+).

Belongs to the PPP phosphatase family. PP-1 subfamily. As to quaternary structure, interacts with Nop17l. The cofactor is Mn(2+).

The catalysed reaction is O-phospho-L-seryl-[protein] + H2O = L-seryl-[protein] + phosphate. The enzyme catalyses O-phospho-L-threonyl-[protein] + H2O = L-threonyl-[protein] + phosphate. This is Serine/threonine-protein phosphatase alpha-3 isoform (Pp1-13C) from Drosophila melanogaster (Fruit fly).